We begin with the raw amino-acid sequence, 497 residues long: Putative aldehyde dehydrogenase AldA (497 aa).

213 to 219 provides a ligand contact to NAD(+); that stretch reads GKGSESG. Active-site residues include Glu-257 and Cys-291.

This sequence belongs to the aldehyde dehydrogenase family.

The catalysed reaction is an aldehyde + NAD(+) + H2O = a carboxylate + NADH + 2 H(+). This is Putative aldehyde dehydrogenase AldA (aldA) from Staphylococcus haemolyticus (strain JCSC1435).